A 556-amino-acid chain; its full sequence is Phosphoenolpyruvate-protein phosphotransferase (556 aa).

His-186 functions as the Tele-phosphohistidine intermediate in the catalytic mechanism. Arg-288 and Arg-325 together coordinate phosphoenolpyruvate. Glu-415 and Asp-439 together coordinate Mg(2+). Phosphoenolpyruvate-binding positions include 438-439 and Arg-449; that span reads ND. The Proton donor role is filled by Cys-486.

It belongs to the PEP-utilizing enzyme family. Homodimer. Mg(2+) is required as a cofactor.

Its subcellular location is the cytoplasm. It carries out the reaction L-histidyl-[protein] + phosphoenolpyruvate = N(pros)-phospho-L-histidyl-[protein] + pyruvate. In terms of biological role, general (non sugar-specific) component of the phosphoenolpyruvate-dependent sugar phosphotransferase system (sugar PTS). This major carbohydrate active-transport system catalyzes the phosphorylation of incoming sugar substrates concomitantly with their translocation across the cell membrane. Enzyme I transfers the phosphoryl group from phosphoenolpyruvate (PEP) to the phosphoryl carrier protein (HPr). The sequence is that of Phosphoenolpyruvate-protein phosphotransferase (ptsI) from Streptomyces coelicolor (strain ATCC BAA-471 / A3(2) / M145).